Reading from the N-terminus, the 579-residue chain is 6-deoxy-6-sulfo-D-gluconate dehydratase (579 aa).

The [4Fe-4S] cluster site is built by cysteine 59, cysteine 127, and cysteine 200.

This sequence belongs to the IlvD/Edd family. Homodimer. Requires [4Fe-4S] cluster as cofactor.

The enzyme catalyses 6-deoxy-6-sulfo-D-gluconate = 2-dehydro-3,6-dideoxy-6-sulfo-D-gluconate + H2O. In terms of biological role, catalyzes the dehydration of 6-deoxy-6-sulfo-D-gluconate to 2-dehydro-3,6-dideoxy-6-sulfo-D-gluconate. Is involved in a degradation pathway of sulfoquinovose (SQ) that allows P.putida SQ1 to use SQ as the sole carbon and energy source for growth. The sequence is that of 6-deoxy-6-sulfo-D-gluconate dehydratase from Pseudomonas putida (Arthrobacter siderocapsulatus).